The sequence spans 542 residues: Cytochrome P450 monooxygenase sdnH (542 aa).

Residues 25 to 45 form a helical membrane-spanning segment; sequence LYVAGGILGAFTVYSIILVVY. The disordered stretch occupies residues 141–160; sequence IIPPRGLGQEDSIGSTRSHD. A helical transmembrane segment spans residues 340–360; sequence FMGAGTYPTAATLIFVAYYIL. Heme is bound at residue Cys483. Residue Asn506 is glycosylated (N-linked (GlcNAc...) asparagine).

It belongs to the cytochrome P450 family. Heme serves as cofactor.

It is found in the membrane. It participates in antibiotic biosynthesis. In terms of biological role, cytochrome P450 monooxygenase; part of the gene cluster that mediates the biosynthesis of sordarin and hypoxysordarin, glycoside antibiotics with a unique tetracyclic diterpene aglycone structure. First, the geranylgeranyl diphosphate synthase sdnC constructs GGDP from farnesyl diphosphate and isopentenyl diphosphate. The diterpene cyclase sdnA then catalyzes the cyclization of GGDP to afford cycloaraneosene. Cycloaraneosene is then hydroxylated four times by the putative cytochrome P450 monooxygenases sdnB, sdnE, sdnF and sdnH to give a hydroxylated cycloaraneosene derivative such as cycloaraneosene-8,9,13,19-tetraol. Although the order of the hydroxylations is unclear, at least C8, C9 and C13 of the cycloaraneosene skeleton are hydroxylated before the sordaricin formation. Dehydration of the 13-hydroxy group of the hydroxylated cycloaraneosene derivative might be catalyzed by an unassigned hypothetical protein such as sdnG and sdnP to construct the cyclopentadiene moiety. The FAD-dependent oxidoreductase sdnN is proposed to catalyze the oxidation at C9 of the hydroxylated cycloaraneosene derivative and also catalyze the Baeyer-Villiger oxidation to give the lactone intermediate. The presumed lactone intermediate would be hydrolyzed to give an acrolein moiety and a carboxylate moiety. Then, [4+2]cycloaddition would occur between the acrolein moiety and the cyclopentadiene moiety to give sordaricin. SdnN might also be involved in the [4+2]cycloaddition after the hypothesized oxidation to accommodate the oxidized product and prompt the [4+2]cycloaddition. GDP-6-deoxy-D-altrose may be biosynthesized from GDP-D-mannose by the putative GDP-mannose-4,6-dehydratase sdnI and the short-chain dehydrogenase sdnK. The glycosyltransferase sdnJ catalyzes the attachment of 6-deoxy-D-altrose onto the 19-hydroxy group of sordaricin to give 4'-O-demethylsordarin. The methyltransferase sdnD would complete the biosynthesis of sordarin. Sordarin can be further modified into hypoxysordarin. The unique acyl chain at the 3'-hydroxy group of hypoxysordarin would be constructed by an iterative type I PKS sdnO and the trans-acting polyketide methyltransferase sdnL. SdnL would be responsible for the introduction of an alpha-methyl group of the polyketide chain. Alternatively, the beta-lactamase-like protein sdnR might be responsible for the cleavage and transfer of the polyketide chain from the PKS sdnO to sordarin. Two putative cytochrome P450 monooxygenases, sdnQ and sdnT, might catalyze the epoxidations of the polyketide chain to complete the biosynthesis of hypoxysordarin. Transcriptional regulators sdnM and sdnS are presumably encoded for the transcriptional regulation of the expression of the sdn gene cluster. This Sordaria araneosa (Pleurage araneosa) protein is Cytochrome P450 monooxygenase sdnH.